A 257-amino-acid polypeptide reads, in one-letter code: UPF0246 protein Shal_1126 (257 aa).

The protein belongs to the UPF0246 family.

The chain is UPF0246 protein Shal_1126 from Shewanella halifaxensis (strain HAW-EB4).